The following is a 222-amino-acid chain: UPF0502 protein XCV4380 (222 aa).

Belongs to the UPF0502 family.

The sequence is that of UPF0502 protein XCV4380 from Xanthomonas euvesicatoria pv. vesicatoria (strain 85-10) (Xanthomonas campestris pv. vesicatoria).